The chain runs to 90 residues: Acylphosphatase (90 aa).

An Acylphosphatase-like domain is found at 3-90; sequence NYKIIVFGTV…KTYNDFSVTY (88 aa). Catalysis depends on residues Arg-18 and Asn-36.

Belongs to the acylphosphatase family.

It carries out the reaction an acyl phosphate + H2O = a carboxylate + phosphate + H(+). This is Acylphosphatase (acyP) from Ligilactobacillus salivarius (strain UCC118) (Lactobacillus salivarius).